We begin with the raw amino-acid sequence, 205 residues long: Large ribosomal subunit protein uL3c (205 aa).

The segment at 129–154 (SRGPMSHGSKNHRQPGSIGAGTTPGR) is disordered.

This sequence belongs to the universal ribosomal protein uL3 family. In terms of assembly, part of the 50S ribosomal subunit.

The protein localises to the plastid. The protein resides in the chloroplast. Its function is as follows. One of the primary rRNA binding proteins, it binds directly near the 3'-end of the 23S rRNA, where it nucleates assembly of the 50S subunit. The sequence is that of Large ribosomal subunit protein uL3c (rpl3) from Pyropia yezoensis (Susabi-nori).